Reading from the N-terminus, the 282-residue chain is MVLVGCHVSIAGSIDRAVGRALDAGCDTFQIFSRNPRGWKVKDLDPGLAGAFRAAVSASGIGPVVDHMPYLPNPASPDAEIYEKSVAALAGELRRCSLLGIPYLVTHLGHHRGAGMEAGQERVVAAINRAFEDAGESDVMLLLENTAGEKNSVGTTVDNLSRIVDGIDAKERVGICFDTCHAFAAGYDLRTAEGVDAVLGEIDDAIDLSRLRVVHLNDCKGDLGSGLDRHEHIGLGRIGEDGFRHILRHPAVRRLPLICETPVDERRSDTGNIAKVRELAGA.

9 residues coordinate Zn(2+): H67, H107, E144, D178, H181, H215, D228, H230, and E260.

This sequence belongs to the AP endonuclease 2 family. It depends on Zn(2+) as a cofactor.

The enzyme catalyses Endonucleolytic cleavage to 5'-phosphooligonucleotide end-products.. In terms of biological role, endonuclease IV plays a role in DNA repair. It cleaves phosphodiester bonds at apurinic or apyrimidinic (AP) sites, generating a 3'-hydroxyl group and a 5'-terminal sugar phosphate. This Methanoculleus marisnigri (strain ATCC 35101 / DSM 1498 / JR1) protein is Probable endonuclease 4.